The sequence spans 95 residues: Large ribosomal subunit protein uL23 (95 aa).

It belongs to the universal ribosomal protein uL23 family. As to quaternary structure, part of the 50S ribosomal subunit. Contacts protein L29, and trigger factor when it is bound to the ribosome.

Functionally, one of the early assembly proteins it binds 23S rRNA. One of the proteins that surrounds the polypeptide exit tunnel on the outside of the ribosome. Forms the main docking site for trigger factor binding to the ribosome. This Shouchella clausii (strain KSM-K16) (Alkalihalobacillus clausii) protein is Large ribosomal subunit protein uL23.